We begin with the raw amino-acid sequence, 115 residues long: Large ribosomal subunit protein bL20 (115 aa).

Belongs to the bacterial ribosomal protein bL20 family.

Functionally, binds directly to 23S ribosomal RNA and is necessary for the in vitro assembly process of the 50S ribosomal subunit. It is not involved in the protein synthesizing functions of that subunit. In Synechococcus sp. (strain WH7803), this protein is Large ribosomal subunit protein bL20.